Reading from the N-terminus, the 255-residue chain is Indole-3-glycerol phosphate synthase (255 aa).

Belongs to the TrpC family.

It catalyses the reaction 1-(2-carboxyphenylamino)-1-deoxy-D-ribulose 5-phosphate + H(+) = (1S,2R)-1-C-(indol-3-yl)glycerol 3-phosphate + CO2 + H2O. It functions in the pathway amino-acid biosynthesis; L-tryptophan biosynthesis; L-tryptophan from chorismate: step 4/5. The polypeptide is Indole-3-glycerol phosphate synthase (Streptococcus pneumoniae serotype 2 (strain D39 / NCTC 7466)).